A 984-amino-acid polypeptide reads, in one-letter code: Probable translation initiation factor IF-2 (984 aa).

The DOD-type homing endonuclease domain maps to 94–215; sequence VNGWYSVTVT…LPLLLLRFGI (122 aa). Residues 391-608 enclose the tr-type G domain; sequence TTETHNFVAN…LIAGLSQKYL (218 aa). GTP-binding positions include 464–468 and 518–521; these read DTPGH and NKID.

The protein belongs to the TRAFAC class translation factor GTPase superfamily. Classic translation factor GTPase family. IF-2 subfamily. In terms of processing, this protein undergoes a protein self splicing that involves a post-translational excision of the intervening region (intein) followed by peptide ligation.

Function in general translation initiation by promoting the binding of the formylmethionine-tRNA to ribosomes. Seems to function along with eIF-2. This Pyrococcus furiosus (strain ATCC 43587 / DSM 3638 / JCM 8422 / Vc1) protein is Probable translation initiation factor IF-2 (infB).